The following is a 1088-amino-acid chain: MALHFQSLAELEVLCTHLYIGTDLTQRIEAEKALLELIDSPECLSKCQLLLEQGTTSYAQLLAATCLSKLVSRVSPLPVEQRMDIRNYILNYVASQPKLAPFVIQALIQVIAKITKLGWFEVQKDQFVFREIIADVKKFLQGTVEHCIIGVIILSELTQEMNLVDYSRPSAKHRKIATSFRDTSLKDVLVLACSLLKEVFAKPLNLQDQCQQNLVMQVLKLVLNCLNFDFIGSSADESADDLCTVQIPTTWRTIFLEPETLDLFFNLYHSLPPLLSQLALSCLVQFASTRRSLFNSPERAKYLGNLIKGVKRILENPQGLSDPGNYHEFCRFLARLKTNYQLGELVMVKEYPEVIRLIANFTITSLQHWEFAPNSVHYLLTLWQRMVASVPFVKSTEPHLLDTYAPEITKAFITSRLDSVAIVVRDHLDDPLDDTATVFQQLEQLCTVSRCEYEKTCALLVQLFDQNAQNYQKLLHPYSGVTVDITIQEGRLAWLVYLVGTVVGGRLTYTSTDEHDAMDGELSCRVFQLISLMDTGLPRCCNEKIELAILWFLDQFRKTYVGDQLQRTSKVYARMSEVLGITDDNHVLETFMTKIVTNLKYWGRYEPVISRTLQFLNDLSVGYILLKKLVKIDAVKFMLKNHTSEHFPFLGISDNHSLSDFRCRTTFYTALTRLLMVDLGEDEDEFENFMLPLTVAFETVLQIFNNNFKQEDVKRMLIGLARDLRGIAFALNTKTSYTMLFDWMYPTYLPLLQNAVERWYGEPTCTTPILKLMAELMQNRSQRLNFDVSSPNGILLFREASKMVCTYGNQILSLGSLSKDQIYPMKLKGISICYSALKSALCGNYVSFGVFKLYGDNHFDNVLQAFVKMLLSVSHSDLLQYRKLSQSYYPLLECLTQDHMSFIINLEPPVLMYVLTSISEGLTTLDTVVSSSCCTSLDYIVTYLFKHIAKEGKKPLRCREATQAGQRLLHFMQQNPDVLQQMMSVLMNTIVFEDCRNQWSVSRPLLGLILLNEKYFSELRASLINSQPLPKQEVLAQCFRNLMEGVEQNLSVKNRDRFTQNLSVFRRDVAEALRSDGNTEPCSLDMMS.

Ala-2 is subject to N-acetylalanine. At Ser-569 the chain carries Phosphoserine.

This sequence belongs to the exportin family. Binds to nucleoporins and the GTP-bound form of Ran. In terms of tissue distribution, highly expressed in testis, moderately in pancreas and weakly in other tissues studied.

It is found in the cytoplasm. The protein localises to the nucleus. It localises to the nuclear pore complex. In terms of biological role, may function as a nuclear transport receptor. The protein is Ran-binding protein 17 (RANBP17) of Homo sapiens (Human).